A 169-amino-acid polypeptide reads, in one-letter code: Large ribosomal subunit protein bL9 (169 aa).

This sequence belongs to the bacterial ribosomal protein bL9 family.

Its function is as follows. Binds to the 23S rRNA. The chain is Large ribosomal subunit protein bL9 from Chlamydia pneumoniae (Chlamydophila pneumoniae).